Consider the following 92-residue polypeptide: MQVLVRDNNVDQALRVLKKKMQREGVFREMKQRRSYEKPSERKTREKSEAIRRARKLARKQAIREGLLPAPPKKKLPERKPPLPQTAARPAG.

Over residues 25–52 the composition is skewed to basic and acidic residues; that stretch reads GVFREMKQRRSYEKPSERKTREKSEAIR. The interval 25–92 is disordered; it reads GVFREMKQRR…LPQTAARPAG (68 aa).

The protein belongs to the bacterial ribosomal protein bS21 family.

The protein is Small ribosomal subunit protein bS21A of Bradyrhizobium diazoefficiens (strain JCM 10833 / BCRC 13528 / IAM 13628 / NBRC 14792 / USDA 110).